A 206-amino-acid polypeptide reads, in one-letter code: FMN-dependent NADH:quinone oxidoreductase 1 (206 aa).

Residues Ser-10 and 16–18 (SLS) each bind FMN.

The protein belongs to the azoreductase type 1 family. As to quaternary structure, homodimer. It depends on FMN as a cofactor.

It catalyses the reaction 2 a quinone + NADH + H(+) = 2 a 1,4-benzosemiquinone + NAD(+). The catalysed reaction is N,N-dimethyl-1,4-phenylenediamine + anthranilate + 2 NAD(+) = 2-(4-dimethylaminophenyl)diazenylbenzoate + 2 NADH + 2 H(+). In terms of biological role, quinone reductase that provides resistance to thiol-specific stress caused by electrophilic quinones. Its function is as follows. Also exhibits azoreductase activity. Catalyzes the reductive cleavage of the azo bond in aromatic azo compounds to the corresponding amines. The polypeptide is FMN-dependent NADH:quinone oxidoreductase 1 (Burkholderia lata (strain ATCC 17760 / DSM 23089 / LMG 22485 / NCIMB 9086 / R18194 / 383)).